The sequence spans 226 residues: Teichuronic acid biosynthesis protein TuaF (226 aa).

Helical transmembrane passes span 15–35 (NIIW…ILPS) and 202–222 (VLGV…PEFF).

It is found in the cell membrane. It functions in the pathway cell wall biogenesis; teichuronic acid biosynthesis. The protein is Teichuronic acid biosynthesis protein TuaF (tuaF) of Bacillus subtilis (strain 168).